A 256-amino-acid polypeptide reads, in one-letter code: Hemolymph lipopolysaccharide-binding protein (256 aa).

The first 21 residues, 1-21, serve as a signal peptide directing secretion; sequence MMNTRALLPLSVLLMATLCLC. A propeptide spanning residues 22–33 is cleaved from the precursor; it reads ELPIPILQRFVR. The N-linked (GlcNAc...) asparagine glycan is linked to N56. Positions 146-256 constitute a C-type lectin domain; the sequence is IICQQEGGHL…KLPFVCEVEL (111 aa). Cystine bridges form between C148-C252 and C230-C244.

In terms of tissue distribution, hemolymph.

The protein localises to the secreted. Participates probably in the elimination of foreign substances invading the insect abdominal cavity, and in trapping intracellular symbionts, when they leak from the mycetomes into the hemolymph. The chain is Hemolymph lipopolysaccharide-binding protein from Periplaneta americana (American cockroach).